The following is a 358-amino-acid chain: Phospho-N-acetylmuramoyl-pentapeptide-transferase (358 aa).

10 consecutive transmembrane segments (helical) span residues 21–41 (YLTL…FVVG), 71–91 (TMGG…WADL), 95–115 (YIWV…VDDY), 133–153 (FWQS…ASVA), 166–186 (VAVN…VGSS), 197–217 (GLAV…AYAA), 234–254 (AGEL…FLWF), 261–281 (VFMG…LAVL), 286–306 (LVLF…MLQV), and 337–357 (IVRF…TLKI).

Belongs to the glycosyltransferase 4 family. MraY subfamily. The cofactor is Mg(2+).

It localises to the cell inner membrane. It carries out the reaction UDP-N-acetyl-alpha-D-muramoyl-L-alanyl-gamma-D-glutamyl-meso-2,6-diaminopimeloyl-D-alanyl-D-alanine + di-trans,octa-cis-undecaprenyl phosphate = di-trans,octa-cis-undecaprenyl diphospho-N-acetyl-alpha-D-muramoyl-L-alanyl-D-glutamyl-meso-2,6-diaminopimeloyl-D-alanyl-D-alanine + UMP. Its pathway is cell wall biogenesis; peptidoglycan biosynthesis. In terms of biological role, catalyzes the initial step of the lipid cycle reactions in the biosynthesis of the cell wall peptidoglycan: transfers peptidoglycan precursor phospho-MurNAc-pentapeptide from UDP-MurNAc-pentapeptide onto the lipid carrier undecaprenyl phosphate, yielding undecaprenyl-pyrophosphoryl-MurNAc-pentapeptide, known as lipid I. In Nitrosococcus oceani (strain ATCC 19707 / BCRC 17464 / JCM 30415 / NCIMB 11848 / C-107), this protein is Phospho-N-acetylmuramoyl-pentapeptide-transferase.